A 126-amino-acid polypeptide reads, in one-letter code: Profilin-1 (126 aa).

Belongs to the profilin family. Occurs in many kinds of cells as a complex with monomeric actin in a 1:1 ratio.

The protein resides in the cytoplasm. Its subcellular location is the cytoskeleton. In terms of biological role, binds to actin and affects the structure of the cytoskeleton. At high concentrations, profilin prevents the polymerization of actin, whereas it enhances it at low concentrations. By binding to PIP2, it inhibits the formation of IP3 and DG. The polypeptide is Profilin-1 (proA) (Dictyostelium discoideum (Social amoeba)).